The chain runs to 142 residues: MDVEGLVEQVVSGLGFELVDFETSPKGRLMRVFIDIERGVTVDDCATVSNQLTRVFEVENVDYDRLEVSSPGLDRPLKKTADFERFAGDEVQVRLRMPIGNQRNFIGVLEGLSEGVVRLHTDKGDVAFPFDEIEKARLVPKF.

It belongs to the RimP family.

It localises to the cytoplasm. Its function is as follows. Required for maturation of 30S ribosomal subunits. The protein is Ribosome maturation factor RimP of Aromatoleum aromaticum (strain DSM 19018 / LMG 30748 / EbN1) (Azoarcus sp. (strain EbN1)).